A 322-amino-acid chain; its full sequence is uncharacterized protein (322 aa).

Positions 1 to 17 (MASMAAAIAASRSAVMS) are enriched in low complexity. A disordered region spans residues 1-22 (MASMAAAIAASRSAVMSGNRPL). At alanine 2 the chain carries N-acetylalanine. Serine 37 is subject to Phosphoserine. Positions 81–104 (AAAADAGDVRDPARFPGLRGPTGQ) are disordered. Serine 130 is subject to Phosphoserine. Composition is skewed to polar residues over residues 142-153 (QEPSAATVTSDA) and 161-177 (QGTQGSKPAQSSRSSSL). The interval 142-301 (QEPSAATVTS…DDDALFSEPA (160 aa)) is disordered. Residue serine 176 is modified to Phosphoserine. The segment covering 183-203 (ARKEEEAPFWKINAERSREGP) has biased composition (basic and acidic residues). Residues 245-255 (QEQQTLPSVSA) are compositionally biased toward polar residues.

It localises to the cytoplasm. This is an uncharacterized protein from Mus musculus (Mouse).